The sequence spans 173 residues: Large ribosomal subunit protein uL10 (173 aa).

The protein belongs to the universal ribosomal protein uL10 family. Part of the ribosomal stalk of the 50S ribosomal subunit. The N-terminus interacts with L11 and the large rRNA to form the base of the stalk. The C-terminus forms an elongated spine to which L12 dimers bind in a sequential fashion forming a multimeric L10(L12)X complex.

Forms part of the ribosomal stalk, playing a central role in the interaction of the ribosome with GTP-bound translation factors. The chain is Large ribosomal subunit protein uL10 from Chlorobium phaeobacteroides (strain BS1).